The primary structure comprises 690 residues: Glycine--tRNA ligase beta subunit (690 aa).

The protein belongs to the class-II aminoacyl-tRNA synthetase family. As to quaternary structure, tetramer of two alpha and two beta subunits.

It localises to the cytoplasm. The enzyme catalyses tRNA(Gly) + glycine + ATP = glycyl-tRNA(Gly) + AMP + diphosphate. This is Glycine--tRNA ligase beta subunit from Desulfitobacterium hafniense (strain Y51).